A 131-amino-acid polypeptide reads, in one-letter code: MSMSDPIADMLTRIRNAQAVEKASVVMPSSKLKVAIAKVLKDEGYIDDFAVTEQGGKASLTIGLKYYAGRPVIERLERVSKPGLRVYKGRNEIPQVMNGLGVAIISTPQGLMTDRRARATGVGGEVICYVA.

It belongs to the universal ribosomal protein uS8 family. As to quaternary structure, part of the 30S ribosomal subunit. Contacts proteins S5 and S12.

One of the primary rRNA binding proteins, it binds directly to 16S rRNA central domain where it helps coordinate assembly of the platform of the 30S subunit. The chain is Small ribosomal subunit protein uS8 from Ralstonia nicotianae (strain ATCC BAA-1114 / GMI1000) (Ralstonia solanacearum).